A 214-amino-acid polypeptide reads, in one-letter code: UPF0690 protein C1orf52 homolog (214 aa).

Disordered stretches follow at residues 1 to 66 and 81 to 214; these read MSDE…SVSK and DSRA…QCLD. Over residues 32–44 the composition is skewed to low complexity; it reads PEATASSAPAEPQ. 2 stretches are compositionally biased toward basic and acidic residues: residues 49-61 and 81-97; these read RAAE…DELF and DSRA…EFKV. Residues 152-165 are compositionally biased toward acidic residues; the sequence is EEEEEEQQPDSDDD. At serine 162 the chain carries Phosphoserine. Basic and acidic residues-rich tracts occupy residues 179–192 and 200–214; these read VETF…KRDI and NFVE…QCLD.

It belongs to the UPF0690 family.

This Danio rerio (Zebrafish) protein is UPF0690 protein C1orf52 homolog.